The primary structure comprises 128 residues: Global transcriptional regulator Spx 1 (128 aa).

Cys10 and Cys13 are disulfide-bonded.

The protein belongs to the ArsC family. Spx subfamily. In terms of assembly, interacts with the C-terminal domain of the alpha subunit of the RNAP.

It localises to the cytoplasm. In terms of biological role, global transcriptional regulator that plays a key role in stress response and exerts either positive or negative regulation of genes. Acts by interacting with the C-terminal domain of the alpha subunit of the RNA polymerase (RNAP). This interaction can enhance binding of RNAP to the promoter region of target genes and stimulate their transcription, or block interaction of RNAP with activator. This Lactococcus lactis subsp. lactis (strain IL1403) (Streptococcus lactis) protein is Global transcriptional regulator Spx 1.